The sequence spans 245 residues: MALPLIKPKESEESHLALLSKIHVSKNWKLPPRLPHRAAQRRKRVHRLHEDYETEENDEELQKKKRQNRDAQRAYRERKNNKLQVLEETIESLSKVVKNYETKLNRLQNELQAKESENHALKQKLETLTLKQASVPAQDPILQNLIENFKPMKAIPIKYNTAIKRHQHSTELPSSVKCGFCNDNTTCVCKELETDHRKSDDGVATEQKDMSMPHAECNNKDNPNGLCSNCTNIDKSCIDIRSIIH.

Residues 34 to 47 (LPHRAAQRRKRVHR) are compositionally biased toward basic residues. Positions 34–77 (LPHRAAQRRKRVHRLHEDYETEENDEELQKKKRQNRDAQRAYRE) are disordered. Positions 58 to 121 (DEELQKKKRQ…QAKESENHAL (64 aa)) constitute a bZIP domain. A basic motif region spans residues 63 to 82 (KKKRQNRDAQRAYRERKNNK). A compositionally biased stretch (basic and acidic residues) spans 68–77 (NRDAQRAYRE). Positions 86-114 (LEETIESLSKVVKNYETKLNRLQNELQAK) are leucine-zipper.

The protein belongs to the bZIP family. YAP subfamily. Homodimer.

The protein resides in the cytoplasm. It localises to the nucleus. In terms of biological role, transcription activator involved in the regulation of genes expressed in response to environmental changes and metabolic requirements. According to genome-wide promoter binding and gene expression studies it is a coregulator for the expression of ribosomal genes, while its own expression is induced by the cell cycle specific activator SBF (SWI4-SWI6). The protein is AP-1-like transcription factor YAP5 (YAP5) of Saccharomyces cerevisiae (strain ATCC 204508 / S288c) (Baker's yeast).